The following is a 164-amino-acid chain: HTH-type transcriptional regulator IscR (164 aa).

An HTH rrf2-type domain is found at 2–131 (RLTSKGRYAV…NNITLDELVN (130 aa)). Positions 28–51 (LADISERQGISLSYLEQLFSRLRK) form a DNA-binding region, H-T-H motif. Positions 92, 98, and 104 each coordinate [2Fe-2S] cluster.

Requires [2Fe-2S] cluster as cofactor.

In terms of biological role, regulates the transcription of several operons and genes involved in the biogenesis of Fe-S clusters and Fe-S-containing proteins. This chain is HTH-type transcriptional regulator IscR, found in Pectobacterium atrosepticum (strain SCRI 1043 / ATCC BAA-672) (Erwinia carotovora subsp. atroseptica).